The primary structure comprises 301 residues: MSPEEIKSRVGSGLLSFPVTHFTSDYKLNLESYRRHVEWLSGFEAAALFAAGGTGEFFSLSPNEVGQVTRAAKDVSGEVPIIAGCGYGTSLAVETAKIVEEAGADGILLLPHYLTEAPQEGIYAHVKAVCDSTGLGVILYNRANSVANADTVARLAEACPNLIGFKDGTGKVDLVRHVTAKLGDRLCYIGGMPTHELFAEGFNGVGVTTYSSAVFNFVPELAQRFYRAMRAGDRAVMEGILHTFFFPFAALRDRKAGYPVSIIKAGVELAGFAPGPVRPPLVDLTGEEREILQGLIEASRR.

It belongs to the DapA family.

The catalysed reaction is 5-dehydro-4-deoxy-D-glucarate + H(+) = 2,5-dioxopentanoate + CO2 + H2O. It participates in carbohydrate acid metabolism; D-glucarate degradation; 2,5-dioxopentanoate from D-glucarate: step 2/2. The protein is Probable 5-dehydro-4-deoxyglucarate dehydratase of Rhizobium meliloti (strain 1021) (Ensifer meliloti).